A 279-amino-acid chain; its full sequence is Elongation factor Ts (279 aa).

The interval 80 to 83 (TDFV) is involved in Mg(2+) ion dislocation from EF-Tu.

This sequence belongs to the EF-Ts family.

It localises to the cytoplasm. Associates with the EF-Tu.GDP complex and induces the exchange of GDP to GTP. It remains bound to the aminoacyl-tRNA.EF-Tu.GTP complex up to the GTP hydrolysis stage on the ribosome. This is Elongation factor Ts from Borreliella burgdorferi (strain ZS7) (Borrelia burgdorferi).